Here is a 376-residue protein sequence, read N- to C-terminus: MKAILALADGRVFTGKAFGARGEVTGEVVFNTSMTGYQEILTDPSYCGEIVTMTYPLIGNYGINPEDVESGRPHLSGFIVKEACPYPSNWRSTTTLDDYLKQNQIVGIQGIDTRALVRHIRDNGAQTGIISSIDLDPESLVEKARKAPSIVGRDLVKEVTCKEPYHWTEGPWDLSEGYQQQTGEPRYKVVAYDFGIKRNILRNLVAIGCDVTVVPATTPAQDVMAMNPDGVFLSNGPGDPEPIQYAQENIRQLLGKMPIFGICLGHQLLALALGGHTYKLKFGHRGGNQPVQRKAEGQVEITSQNHGFAVEGSSIDNTAVLTHINLNDNTIEGLEHCKLPAFSVQYHPEASPGPHDARYLFERFADLMEKNRQSQG.

Residues 1–184 form a CPSase region; that stretch reads MKAILALADG…SEGYQQQTGE (184 aa). 3 residues coordinate L-glutamine: Ser-45, Gly-236, and Gly-238. The region spanning 188–374 is the Glutamine amidotransferase type-1 domain; that stretch reads KVVAYDFGIK…ADLMEKNRQS (187 aa). Residue Cys-263 is the Nucleophile of the active site. 5 residues coordinate L-glutamine: Leu-264, Gln-267, Asn-305, Gly-307, and Phe-308. Catalysis depends on residues His-347 and Glu-349.

The protein belongs to the CarA family. In terms of assembly, composed of two chains; the small (or glutamine) chain promotes the hydrolysis of glutamine to ammonia, which is used by the large (or ammonia) chain to synthesize carbamoyl phosphate. Tetramer of heterodimers (alpha,beta)4.

It carries out the reaction hydrogencarbonate + L-glutamine + 2 ATP + H2O = carbamoyl phosphate + L-glutamate + 2 ADP + phosphate + 2 H(+). The enzyme catalyses L-glutamine + H2O = L-glutamate + NH4(+). It functions in the pathway amino-acid biosynthesis; L-arginine biosynthesis; carbamoyl phosphate from bicarbonate: step 1/1. Its pathway is pyrimidine metabolism; UMP biosynthesis via de novo pathway; (S)-dihydroorotate from bicarbonate: step 1/3. In terms of biological role, small subunit of the glutamine-dependent carbamoyl phosphate synthetase (CPSase). CPSase catalyzes the formation of carbamoyl phosphate from the ammonia moiety of glutamine, carbonate, and phosphate donated by ATP, constituting the first step of 2 biosynthetic pathways, one leading to arginine and/or urea and the other to pyrimidine nucleotides. The small subunit (glutamine amidotransferase) binds and cleaves glutamine to supply the large subunit with the substrate ammonia. The sequence is that of Carbamoyl phosphate synthase small chain from Syntrophotalea carbinolica (strain DSM 2380 / NBRC 103641 / GraBd1) (Pelobacter carbinolicus).